The sequence spans 364 residues: tRNA 2-selenouridine synthase (364 aa).

A Rhodanese domain is found at 14–137 (LIADTPIIDV…LRQTAIQATI (124 aa)). The active-site S-selanylcysteine intermediate is C97.

The protein belongs to the SelU family. As to quaternary structure, monomer.

It catalyses the reaction 5-methylaminomethyl-2-thiouridine(34) in tRNA + selenophosphate + (2E)-geranyl diphosphate + H2O + H(+) = 5-methylaminomethyl-2-selenouridine(34) in tRNA + (2E)-thiogeraniol + phosphate + diphosphate. It carries out the reaction 5-methylaminomethyl-2-thiouridine(34) in tRNA + (2E)-geranyl diphosphate = 5-methylaminomethyl-S-(2E)-geranyl-thiouridine(34) in tRNA + diphosphate. The enzyme catalyses 5-methylaminomethyl-S-(2E)-geranyl-thiouridine(34) in tRNA + selenophosphate + H(+) = 5-methylaminomethyl-2-(Se-phospho)selenouridine(34) in tRNA + (2E)-thiogeraniol. The catalysed reaction is 5-methylaminomethyl-2-(Se-phospho)selenouridine(34) in tRNA + H2O = 5-methylaminomethyl-2-selenouridine(34) in tRNA + phosphate. Functionally, involved in the post-transcriptional modification of the uridine at the wobble position (U34) of tRNA(Lys), tRNA(Glu) and tRNA(Gln). Catalyzes the conversion of 2-thiouridine (S2U-RNA) to 2-selenouridine (Se2U-RNA). Acts in a two-step process involving geranylation of 2-thiouridine (S2U) to S-geranyl-2-thiouridine (geS2U) and subsequent selenation of the latter derivative to 2-selenouridine (Se2U) in the tRNA chain. In Escherichia coli O81 (strain ED1a), this protein is tRNA 2-selenouridine synthase.